The following is a 165-amino-acid chain: Nucleotide-binding protein Syncc9605_0652 (165 aa).

This sequence belongs to the YajQ family.

Functionally, nucleotide-binding protein. The polypeptide is Nucleotide-binding protein Syncc9605_0652 (Synechococcus sp. (strain CC9605)).